Consider the following 423-residue polypeptide: Adenylosuccinate synthetase (423 aa).

Residues 12-18 and 40-42 contribute to the GTP site; these read GDEGKGK and GHT. The Proton acceptor role is filled by D13. Mg(2+) contacts are provided by D13 and G40. IMP is bound by residues 13 to 16, 38 to 41, T129, R143, Q224, T239, and R303; these read DEGK and NAGH. Catalysis depends on H41, which acts as the Proton donor. 299–305 is a substrate binding site; the sequence is SVTGRQR. GTP is bound by residues R305, 331 to 333, and 412 to 414; these read KGD and SVG.

This sequence belongs to the adenylosuccinate synthetase family. In terms of assembly, homodimer. Mg(2+) is required as a cofactor.

Its subcellular location is the cytoplasm. It catalyses the reaction IMP + L-aspartate + GTP = N(6)-(1,2-dicarboxyethyl)-AMP + GDP + phosphate + 2 H(+). Its pathway is purine metabolism; AMP biosynthesis via de novo pathway; AMP from IMP: step 1/2. In terms of biological role, plays an important role in the de novo pathway of purine nucleotide biosynthesis. Catalyzes the first committed step in the biosynthesis of AMP from IMP. This is Adenylosuccinate synthetase from Flavobacterium psychrophilum (strain ATCC 49511 / DSM 21280 / CIP 103535 / JIP02/86).